The following is a 140-amino-acid chain: Translation initiation factor 2 subunit beta (140 aa).

It belongs to the eIF-2-beta/eIF-5 family. Heterotrimer composed of an alpha, a beta and a gamma chain.

Functionally, eIF-2 functions in the early steps of protein synthesis by forming a ternary complex with GTP and initiator tRNA. This Pyrococcus furiosus (strain ATCC 43587 / DSM 3638 / JCM 8422 / Vc1) protein is Translation initiation factor 2 subunit beta.